The primary structure comprises 142 residues: Large ribosomal subunit protein uL13 (142 aa).

Belongs to the universal ribosomal protein uL13 family. Part of the 50S ribosomal subunit.

Functionally, this protein is one of the early assembly proteins of the 50S ribosomal subunit, although it is not seen to bind rRNA by itself. It is important during the early stages of 50S assembly. This chain is Large ribosomal subunit protein uL13, found in Hahella chejuensis (strain KCTC 2396).